A 352-amino-acid chain; its full sequence is N-acetyl-gamma-glutamyl-phosphate reductase (352 aa).

Cys-155 is a catalytic residue.

It belongs to the NAGSA dehydrogenase family. Type 1 subfamily.

The protein resides in the cytoplasm. It carries out the reaction N-acetyl-L-glutamate 5-semialdehyde + phosphate + NADP(+) = N-acetyl-L-glutamyl 5-phosphate + NADPH + H(+). It participates in amino-acid biosynthesis; L-arginine biosynthesis; N(2)-acetyl-L-ornithine from L-glutamate: step 3/4. Catalyzes the NADPH-dependent reduction of N-acetyl-5-glutamyl phosphate to yield N-acetyl-L-glutamate 5-semialdehyde. This Picosynechococcus sp. (strain ATCC 27264 / PCC 7002 / PR-6) (Agmenellum quadruplicatum) protein is N-acetyl-gamma-glutamyl-phosphate reductase.